A 60-amino-acid chain; its full sequence is Large ribosomal subunit protein bL33 (60 aa).

It belongs to the bacterial ribosomal protein bL33 family.

The chain is Large ribosomal subunit protein bL33 from Christiangramia forsetii (strain DSM 17595 / CGMCC 1.15422 / KT0803) (Gramella forsetii).